The primary structure comprises 427 residues: CD209 antigen (427 aa).

Topologically, residues 1-37 (MSDSKEPRLQQLGLLEEEQLRGLGFRQTRGYKSLAGC) are cytoplasmic. 3 short sequence motifs (endocytosis signal) span residues 14–15 (LL), 16–18 (EEE), and 31–34 (YKSL). The helical; Signal-anchor for type II membrane protein transmembrane segment at 38–58 (LGHGPLVLQLLSFTLLAALLV) threads the bilayer. Residues 59–427 (QVSKVPSSIS…ASATPNPPPE (369 aa)) lie on the Extracellular side of the membrane. Asn-80 is a glycosylation site (N-linked (GlcNAc...) asparagine). Repeat copies occupy residues 96–118 (KLQEIYQELTQLKAAVGELPEKS), 119–141 (KQQEIYQELSQLKAAVGELPEKS), 142–164 (KQQEIYQELSQLKAAVGELPEKS), 165–187 (KQQEIYQELTRLKAAVGELPEKS), 188–210 (KQQEIYQELSQLKAAVGELPEKS), 211–233 (KQQEIYQELSQLKAAVGELPEKS), 234–256 (KQQEIYQELTQLKAAVGELPEKS), and 257–280 (KQQEIYQELTQLKAAVERLCRRCP). The interval 96–280 (KLQEIYQELT…AVERLCRRCP (185 aa)) is 8 X approximate tandem repeats. Disulfide bonds link Cys-279/Cys-290, Cys-307/Cys-400, and Cys-379/Cys-392. The 116-residue stretch at 286 to 401 (FQGNCYFMSN…CNLAKFWICK (116 aa)) folds into the C-type lectin domain. The Ca(2+) site is built by Glu-370, Asn-372, Val-374, Glu-377, Asn-388, and Asp-389.

As to quaternary structure, homotetramer. Interacts with C1QBP; the interaction is indicative for a C1q:C1QBP:CD209 signaling complex. Interacts with ICAM2 and ICAM3 by binding to mannose-like carbohydrates. Interacts (via C-type lectin domain) with CEACAM1 (via Lewis X moieties); this interaction is regulated by the glycosylation pattern of CEACAM1 on cell types and regulates contact between dendritic cells and neutrophils.

It is found in the membrane. Its function is as follows. Pathogen-recognition receptor expressed on the surface of immature dendritic cells (DCs) and involved in initiation of primary immune response. Thought to mediate the endocytosis of pathogens which are subsequently degraded in lysosomal compartments. The receptor returns to the cell membrane surface and the pathogen-derived antigens are presented to resting T-cells via MHC class II proteins to initiate the adaptive immune response. Probably recognizes in a calcium-dependent manner high mannose N-linked oligosaccharides in a variety of pathogen antigens. Functionally, on DCs it is a high affinity receptor for ICAM2 and ICAM3 by binding to mannose-like carbohydrates. May act as a DC rolling receptor that mediates transendothelial migration of DC presursors from blood to tissues by binding endothelial ICAM2. Seems to regulate DC-induced T-cell proliferation by binding to ICAM3 on T-cells in the immunological synapse formed between DC and T-cells. The chain is CD209 antigen (CD209) from Gorilla gorilla gorilla (Western lowland gorilla).